A 335-amino-acid chain; its full sequence is MIVKKKLAAGEFAETFKNGNNITIIKAVGELVLRAYGADGGEGLRTIVRQGVSIKGMNYTSVMLHTEYAQEIEYWVGDLDYSFQEQTTKSRDVNSFQIPLRDGVRELLPEDASRNRASIKSPVDIWIGGENMTALNGIVDGGRKFEAGQEFQINTFGSVNYWVSDEEIRVFKEYSARAKYAQNEGRTALEANNVPFFDIDVPPELDGVPFSLKARVRHKSKGVDGLGDYTSISVKPAFYITEGDETTDTLIKYTSYGSTGSHSGYDFDDNTLDVMVTLSAGVHRVFPVETELDYDAVQEVQHDWYDESFTTFIEVYSDDPLLTVKGYAQILMERT.

Monomer.

The protein resides in the virion. Functionally, receptor binding protein located at the fivefold vertices. This chain is Spike protein P1 (I), found in Pseudoalteromonas espejiana (Bacteriophage PM2).